Reading from the N-terminus, the 338-residue chain is CDP-paratose 2-epimerase (338 aa).

Substrate is bound at residue threonine 124. Tyrosine 164 acts as the Proton acceptor in catalysis.

It belongs to the NAD(P)-dependent epimerase/dehydratase family. Homotetramer. NAD(+) is required as a cofactor.

It catalyses the reaction CDP-alpha-D-paratose = CDP-3,6-dideoxy-alpha-D-mannose. The protein operates within nucleotide-sugar biosynthesis; CDP-3,6-dideoxy-D-mannose biosynthesis; CDP-3,6-dideoxy-D-mannose from CTP and alpha-D-glucose 1-phosphate: step 5/5. Its function is as follows. Catalyzes the isomeration of CDP-paratose to CDP-tyvelose. The sequence is that of CDP-paratose 2-epimerase (rfbE) from Salmonella typhi.